Consider the following 1325-residue polypeptide: Sperm-specific sodium:proton exchanger (1325 aa).

The N-terminal stretch at 1 to 29 is a signal peptide; it reads MKKRVVKLRELVPAVAALAVAVLIQSATG. The disordered stretch occupies residues 28 to 68; it reads TGSSGGSGHTPTTQATHADDHDLTTHNGTEEHDDGHDDGHD. At 30-76 the chain is on the extracellular side; the sequence is SSGGSGHTPTTQATHADDHDLTTHNGTEEHDDGHDDGHDDLHAHAPK. Positions 44–68 are enriched in basic and acidic residues; it reads HADDHDLTTHNGTEEHDDGHDDGHD. Residue H73 coordinates a 1,2-diacylglycero-3-phosphate. A helical transmembrane segment spans residues 77 to 96; it reads VIVFISGSCLFGAISRSLFK. Topologically, residues 97–101 are cytoplasmic; it reads KLPIP. Residues 102-119 traverse the membrane as a helical segment; sequence YTVVLLILGAILGVVASN. Residues 120–135 lie on the Extracellular side of the membrane; sequence VPLVEEHTRDVAHMDP. Residues 136–152 traverse the membrane as a helical segment; the sequence is HVLLQIFLPVLIFESAF. Residues 153 to 162 lie on the Cytoplasmic side of the membrane; sequence AMDVHTFMRS. A helical transmembrane segment spans residues 163–188; sequence FSQVCILALFGLVVASVLTAVLAMNL. The interval 163–250 is transport core domain; the sequence is FSQVCILALF…AIVIFNVFMK (88 aa). The Extracellular portion of the chain corresponds to 189–194; that stretch reads FNYNWN. Residues 195-220 traverse the membrane as a helical segment; the sequence is FSEAMMFGAIMSATDPVAVVALLKDL. Residues 221-223 lie on the Cytoplasmic side of the membrane; that stretch reads GAS. The helical transmembrane segment at 224–249 threads the bilayer; the sequence is KQLGTIIEGESLLNDGCAIVIFNVFM. Positions 237 to 238 match the Essential for sodium:proton exchange motif; sequence ND. The Extracellular segment spans residues 250–260; sequence KMVFFPQLTST. The helical transmembrane segment at 261–292 threads the bilayer; the sequence is VGQNVLYFLQVAVAGPLWGYAVAKVTVFFLSH. Topologically, residues 293–296 are cytoplasmic; sequence IFND. A helical transmembrane segment spans residues 297–319; it reads ALVEITITLAATYLTYYIGDIWL. The Extracellular segment spans residues 320 to 322; it reads EVS. The chain crosses the membrane as a helical span at residues 323 to 336; that stretch reads GVLAVVVLGLIVNA. At 337 to 343 the chain is on the cytoplasmic side; it reads EKTSISP. Residues 344–377 traverse the membrane as a helical segment; that stretch reads EVEVFLHRFWEMLAYLANTLIFMMVGVVVTQKAL. The Extracellular segment spans residues 378–382; it reads VAVDK. A helical transmembrane segment spans residues 383–412; sequence MDWFYLIILYLAITIIRGMVISLFSPILSR. Positions 383-481 are transport core domain; sequence MDWFYLIILY…TTIQTLLRIL (99 aa). Residues 413 to 418 lie on the Cytoplasmic side of the membrane; sequence IGYGLT. The chain crosses the membrane as a helical span at residues 419-446; the sequence is WRNAVIMTWGGLRGAVGLALALVVENLA. The Extracellular segment spans residues 447-450; it reads GNDV. The chain crosses the membrane as a helical span at residues 451-481; that stretch reads IGSKFLFHTAGIVVLTLVINATTIQTLLRIL. The Cytoplasmic segment spans residues 482-677; the sequence is GMSDISIPKR…GKLMYKICHH (196 aa). The interacts with the S4 segment of voltage sensor domain stretch occupies residues 575–620; the sequence is FADMMEEARLRMLKAEKISYWKQFEHGMLAREALRLLVQHAEVAAD. An interacts with the transport core domain; can lock the transporter in the inward conformation region spans residues 605–620; the sequence is REALRLLVQHAEVAAD. The chain crosses the membrane as a helical span at residues 678–708; that stretch reads MAFEVTINIAIVLNIVPIIMEFVVQDKMASV. At 709–724 the chain is on the extracellular side; sequence STMAAPGSTVSSEPSS. A helical membrane pass occupies residues 725-752; sequence LQKIEDALRISNYVFFVIYAIEAIVKIL. Over 753 to 760 the chain is Cytoplasmic; the sequence is GLGRHYIV. Residues 761–784 traverse the membrane as a helical segment; that stretch reads SHWNKFDAFILVVALVDIIIAETL. Residues 785–795 are Extracellular-facing; that stretch reads LKGSITINLSS. A helical transmembrane segment spans residues 796–822; it reads IKVVKLFRLLRGLRMLRLTKALIPKLI. The tract at residues 796–857 is S4 segment of voltage sensor domain; sequence IKVVKLFRLL…EEVGKIIDRM (62 aa). At 823–1325 the chain is on the cytoplasmic side; that stretch reads LVVNGKINNQ…EEGAAPRVNV (503 aa). The segment at 860–919 is interacts with the S4 segment of voltage sensor domain; it reads NKKILRELKHISETGRLQVVKELGLLQREHPGIAVSVKTRQAIRTILNHSRETIHELQGA. The interval 968–1068 is cNMP-binding domain; it reads KLIDFIKARA…CETTVQVYFI (101 aa). 3',5'-cyclic AMP is bound at residue G1043. Positions 1043, 1044, and 1045 each coordinate 3',5'-cyclic GMP. 3',5'-cyclic AMP is bound by residues M1045, G1046, R1053, and N1054. The 3',5'-cyclic GMP site is built by R1053 and N1054. A disordered region spans residues 1237–1325; sequence MLSRKSSGAA…EEGAAPRVNV (89 aa). Residues 1266–1280 are compositionally biased toward low complexity; it reads VSPSVPTKTTPKPKS.

The protein belongs to the monovalent cation:proton antiporter 1 (CPA1) transporter (TC 2.A.36) family. In terms of assembly, homodimer; the dimerization is stabilized in the presence of phosphatidic acids.

The protein localises to the cell projection. Its subcellular location is the cilium. It localises to the flagellum membrane. The enzyme catalyses Na(+)(in) + H(+)(out) = Na(+)(out) + H(+)(in). Its activity is regulated as follows. Gated by voltage and stimulated by cyclic nucleotides which shift the activation voltage closer to resting membrane potential. Not inhibited by common sodium:proton exchanger inhibitors such as amiloride. Electroneutral sodium:proton antiporter that regulates intracellular pH of sperm along with capacitation and fertility. Activated in response to egg-derived chemoattractants, couples membrane voltage to sodium:proton exchange and transduces membrane hyperpolarization to cytoplasmic alkalization to cAMP signaling and ultimately to sperm motility. This Strongylocentrotus purpuratus (Purple sea urchin) protein is Sperm-specific sodium:proton exchanger.